A 74-amino-acid chain; its full sequence is Protein krueppel (74 aa).

C2H2-type zinc fingers lie at residues 1–4 (ERTH), 10–32 (FKCPECQKRFTRDHHLKTHMRLH), 38–60 (YHCSHCDRHFVQVANLRRHLRVH), and 66–74 (YTCEICKAK).

It belongs to the krueppel C2H2-type zinc-finger protein family.

It localises to the nucleus. Krueppel is a gap class segmentation protein. The chain is Protein krueppel (Kr) from Bradysia coprophila (Dark-winged fungus gnat).